Reading from the N-terminus, the 1486-residue chain is Homeobox protein cut-like 2 (1486 aa).

The interval D114–I167 is disordered. Positions P127–E149 are enriched in basic and acidic residues. Phosphoserine is present on S143. Positions T195–A374 form a coiled coil. Disordered regions lie at residues L415 to F481, P517 to E549, E661 to E690, V716 to P758, Y800 to T858, and G964 to Q1032. A compositionally biased stretch (acidic residues) spans P419 to S428. The segment covering Q443–G460 has biased composition (pro residues). Residues Q461 to P470 are compositionally biased toward low complexity. Residues P517–G532 show a composition bias toward pro residues. Residues A544–R631 constitute a DNA-binding region (CUT 1). The span at A680 to E690 shows a compositional bias: polar residues. Positions E690–A717 form a coiled coil. Residues S802–S816 show a composition bias toward low complexity. Residues P834–D844 show a composition bias toward acidic residues. Over residues E845–A854 the composition is skewed to basic and acidic residues. Positions Q887 to S974 form a DNA-binding region, CUT 2. Polar residues predominate over residues V967–A976. The segment covering G1017–S1031 has biased composition (low complexity). Positions Q1038 to L1125 form a DNA-binding region, CUT 3. A DNA-binding region (homeobox) is located at residues I1168–M1227. A disordered region spans residues G1231–P1453. Residues E1266–E1276 are compositionally biased toward basic and acidic residues. Residues E1283–K1293 are compositionally biased toward polar residues. The span at E1320–D1334 shows a compositional bias: basic and acidic residues. A compositionally biased stretch (polar residues) spans K1381 to A1401. The segment covering S1402–I1420 has biased composition (low complexity). Residues S1421–K1431 show a composition bias toward pro residues.

It belongs to the CUT homeobox family.

The protein localises to the nucleus. In terms of biological role, transcription factor involved in the control of neuronal proliferation and differentiation in the brain. Regulates dendrite development and branching, dendritic spine formation, and synaptogenesis in cortical layers II-III. Binds to DNA in a sequence-specific manner. This chain is Homeobox protein cut-like 2 (CUX2), found in Homo sapiens (Human).